The following is a 254-amino-acid chain: 5-oxoprolinase subunit A (254 aa).

It belongs to the LamB/PxpA family. Forms a complex composed of PxpA, PxpB and PxpC.

The catalysed reaction is 5-oxo-L-proline + ATP + 2 H2O = L-glutamate + ADP + phosphate + H(+). Functionally, catalyzes the cleavage of 5-oxoproline to form L-glutamate coupled to the hydrolysis of ATP to ADP and inorganic phosphate. This is 5-oxoprolinase subunit A from Burkholderia lata (strain ATCC 17760 / DSM 23089 / LMG 22485 / NCIMB 9086 / R18194 / 383).